The primary structure comprises 255 residues: Acetyl-coenzyme A carboxylase carboxyl transferase subunit alpha (255 aa).

Residues 1-235 (MNIAKIVREA…KKELQTELAR (235 aa)) form the CoA carboxyltransferase C-terminal domain.

The protein belongs to the AccA family. As to quaternary structure, acetyl-CoA carboxylase is a heterohexamer composed of biotin carboxyl carrier protein (AccB), biotin carboxylase (AccC) and two subunits each of ACCase subunit alpha (AccA) and ACCase subunit beta (AccD).

Its subcellular location is the cytoplasm. It carries out the reaction N(6)-carboxybiotinyl-L-lysyl-[protein] + acetyl-CoA = N(6)-biotinyl-L-lysyl-[protein] + malonyl-CoA. Its pathway is lipid metabolism; malonyl-CoA biosynthesis; malonyl-CoA from acetyl-CoA: step 1/1. In terms of biological role, component of the acetyl coenzyme A carboxylase (ACC) complex. First, biotin carboxylase catalyzes the carboxylation of biotin on its carrier protein (BCCP) and then the CO(2) group is transferred by the carboxyltransferase to acetyl-CoA to form malonyl-CoA. The chain is Acetyl-coenzyme A carboxylase carboxyl transferase subunit alpha from Streptococcus pneumoniae (strain CGSP14).